Consider the following 214-residue polypeptide: Pyridoxine/pyridoxamine 5'-phosphate oxidase (214 aa).

Substrate is bound by residues 9-12 and K67; that span reads RKDY. Residues 62–67, 77–78, R83, K84, and Q106 contribute to the FMN site; these read RMVLLK and FT. Y124, R128, and S132 together coordinate substrate. Residues 141–142 and W186 each bind FMN; that span reads QS. Residue 192 to 194 coordinates substrate; that stretch reads RLH. R196 contacts FMN.

Belongs to the pyridoxamine 5'-phosphate oxidase family. In terms of assembly, homodimer. FMN is required as a cofactor.

The enzyme catalyses pyridoxamine 5'-phosphate + O2 + H2O = pyridoxal 5'-phosphate + H2O2 + NH4(+). It carries out the reaction pyridoxine 5'-phosphate + O2 = pyridoxal 5'-phosphate + H2O2. The protein operates within cofactor metabolism; pyridoxal 5'-phosphate salvage; pyridoxal 5'-phosphate from pyridoxamine 5'-phosphate: step 1/1. Its pathway is cofactor metabolism; pyridoxal 5'-phosphate salvage; pyridoxal 5'-phosphate from pyridoxine 5'-phosphate: step 1/1. In terms of biological role, catalyzes the oxidation of either pyridoxine 5'-phosphate (PNP) or pyridoxamine 5'-phosphate (PMP) into pyridoxal 5'-phosphate (PLP). The chain is Pyridoxine/pyridoxamine 5'-phosphate oxidase from Nostoc punctiforme (strain ATCC 29133 / PCC 73102).